We begin with the raw amino-acid sequence, 197 residues long: GTP cyclohydrolase-2 (197 aa).

50–54 lines the GTP pocket; the sequence is RIHSE. 3 residues coordinate Zn(2+): Cys-55, Cys-66, and Cys-68. Residues Gln-71, 93 to 95, and Thr-115 each bind GTP; that span reads EGR. Asp-127 serves as the catalytic Proton acceptor. Arg-129 serves as the catalytic Nucleophile. GTP-binding residues include Thr-150 and Lys-155.

Belongs to the GTP cyclohydrolase II family. Zn(2+) serves as cofactor.

The catalysed reaction is GTP + 4 H2O = 2,5-diamino-6-hydroxy-4-(5-phosphoribosylamino)-pyrimidine + formate + 2 phosphate + 3 H(+). It functions in the pathway cofactor biosynthesis; riboflavin biosynthesis; 5-amino-6-(D-ribitylamino)uracil from GTP: step 1/4. Catalyzes the conversion of GTP to 2,5-diamino-6-ribosylamino-4(3H)-pyrimidinone 5'-phosphate (DARP), formate and pyrophosphate. This is GTP cyclohydrolase-2 from Neisseria meningitidis serogroup C (strain 053442).